Reading from the N-terminus, the 1434-residue chain is DNA-directed RNA polymerase subunit beta (1434 aa).

Belongs to the RNA polymerase beta chain family. In terms of assembly, the RNAP catalytic core consists of 2 alpha, 1 beta, 1 beta' and 1 omega subunit. When a sigma factor is associated with the core the holoenzyme is formed, which can initiate transcription.

The catalysed reaction is RNA(n) + a ribonucleoside 5'-triphosphate = RNA(n+1) + diphosphate. Its function is as follows. DNA-dependent RNA polymerase catalyzes the transcription of DNA into RNA using the four ribonucleoside triphosphates as substrates. In Ureaplasma urealyticum serovar 10 (strain ATCC 33699 / Western), this protein is DNA-directed RNA polymerase subunit beta.